Reading from the N-terminus, the 75-residue chain is Acyl carrier protein (75 aa).

The Carrier domain occupies 1 to 75 (MALFDDVKEV…GDAIKFIENV (75 aa)). O-(pantetheine 4'-phosphoryl)serine is present on Ser-36.

Belongs to the acyl carrier protein (ACP) family. Post-translationally, 4'-phosphopantetheine is transferred from CoA to a specific serine of apo-ACP by AcpS. This modification is essential for activity because fatty acids are bound in thioester linkage to the sulfhydryl of the prosthetic group.

Its subcellular location is the cytoplasm. The protein operates within lipid metabolism; fatty acid biosynthesis. In terms of biological role, carrier of the growing fatty acid chain in fatty acid biosynthesis. In Sulfurovum sp. (strain NBC37-1), this protein is Acyl carrier protein.